The following is a 142-amino-acid chain: MATKIDKEACRAAYNLVRDDGSAVIWVTFRYDGATIVPGDQGADYQHFIQQCTDDVRLFAFVRFTTGDAMSKRSKFALITWIGEDVSGLQRAKTGTDKTLVKEVVQNFAKEFVISDRKELEEDFIRSELKKAGGANYDAQSE.

Ala2 bears the N-acetylalanine mark. One can recognise an ADF-H domain in the interval Ala2–Lys130. The segment at Thr66–Lys75 is flexible and important for F-actin binding. Residue Lys102 is modified to N6-acetyllysine. Ser141 is subject to Phosphoserine.

The protein belongs to the actin-binding proteins ADF family. Coactosin subfamily. In terms of assembly, interacts with 5-lipoxygenase (ALOX5/5LO) in a calcium-independent manner. Binds to F-actin with a stoichiometry of 1:2.

The protein resides in the cytoplasm. Its subcellular location is the cytoskeleton. It is found in the nucleus. Functionally, binds to F-actin in a calcium-independent manner. Has no direct effect on actin depolymerization. Acts as a chaperone for ALOX5 (5LO), influencing both its stability and activity in leukotrienes synthesis. The sequence is that of Coactosin-like protein (Cotl1) from Mus musculus (Mouse).